The following is a 712-amino-acid chain: DNA ligase (712 aa).

Residues 1-22 (MSTQYDSDSSPAASNSGSADPA) are compositionally biased toward low complexity. The tract at residues 1–23 (MSTQYDSDSSPAASNSGSADPAL) is disordered. 53–57 (DAEFD) serves as a coordination point for NAD(+). Positions 69–93 (SHPEAVTGPSPTTEVAPSPPESSPF) are disordered. Residues 104-105 (SL) and Glu129 each bind NAD(+). Lys131 (N6-AMP-lysine intermediate) is an active-site residue. Residues Arg152, Glu192, Lys308, and Lys332 each coordinate NAD(+). Positions 426, 429, 445, and 451 each coordinate Zn(2+). One can recognise a BRCT domain in the interval 624–712 (IQADLLAGLS…GPGKGDAEED (89 aa)).

The protein belongs to the NAD-dependent DNA ligase family. LigA subfamily. It depends on Mg(2+) as a cofactor. Requires Mn(2+) as cofactor.

The enzyme catalyses NAD(+) + (deoxyribonucleotide)n-3'-hydroxyl + 5'-phospho-(deoxyribonucleotide)m = (deoxyribonucleotide)n+m + AMP + beta-nicotinamide D-nucleotide.. In terms of biological role, DNA ligase that catalyzes the formation of phosphodiester linkages between 5'-phosphoryl and 3'-hydroxyl groups in double-stranded DNA using NAD as a coenzyme and as the energy source for the reaction. It is essential for DNA replication and repair of damaged DNA. The chain is DNA ligase from Corynebacterium urealyticum (strain ATCC 43042 / DSM 7109).